The primary structure comprises 316 residues: Ribosomal RNA small subunit methyltransferase H (316 aa).

S-adenosyl-L-methionine-binding positions include 35 to 37 (AGH), D55, F84, D105, and Q112.

The protein belongs to the methyltransferase superfamily. RsmH family.

The protein resides in the cytoplasm. It carries out the reaction cytidine(1402) in 16S rRNA + S-adenosyl-L-methionine = N(4)-methylcytidine(1402) in 16S rRNA + S-adenosyl-L-homocysteine + H(+). Specifically methylates the N4 position of cytidine in position 1402 (C1402) of 16S rRNA. This chain is Ribosomal RNA small subunit methyltransferase H, found in Streptococcus thermophilus (strain ATCC BAA-250 / LMG 18311).